The primary structure comprises 224 residues: CRIB domain-containing protein RIC1 (224 aa).

Positions 29–42 (IGFPTDVKHVAHIG) constitute a CRIB domain. Positions 38–224 (VAHIGSDGPT…SVDTTCNDII (187 aa)) are disordered. Polar residues-rich tracts occupy residues 69–84 (SRGN…TNQR), 114–132 (PNHN…ASSD), 144–155 (AHGSTDSSNDQE), and 215–224 (SVDTTCNDII).

As to quaternary structure, interacts with ARAC11/ROP1. Expressed in columella cells from the root tip and epidermal cells at the base of lateral roots, leaves, stems, flowers, anthers, pollen and siliques.

Its subcellular location is the cytoplasm. The protein localises to the cytoskeleton. Functions as a downstream effector of Rho-related GTP binding proteins of the 'Rho of Plants' (ROPs) family. Participates in the propagation of ROP GTPase signals in specific cellular responses. Required for cortical microtubule organization. Promotes microtubule bundling and formation of well-ordered microtubule arrays in the neck region of pavement cells. This restricts cell lateral expansion to generate the narrow neck morphology of pavement cells. Its function is inhibited when it interacts with activated ARAC4/ROP2. Represses ARAC4/ROP2 activation and antagonizes the RIC4-actin pathway that promotes the assembly of cortical actin microfilaments. Acts as a downstream effector of ARAC3/ROP6 which functions in a signaling pathway that negatively regulates clathrin-mediated endocytosis and internalization of PIN1 and PIN2. Required for the asymmetric auxin distribution during root gravitropism and vascular patterning. Positively regulates auxin responses, but negatively regulates ABA responses during lateral root development and primary root elongation. This is CRIB domain-containing protein RIC1 (RIC1) from Arabidopsis thaliana (Mouse-ear cress).